Here is a 152-residue protein sequence, read N- to C-terminus: Cell division protein SepF (152 aa).

The disordered stretch occupies residues 25 to 54 (EEREPVQEEKGTKDKAAFQERPQTGKQNVV). Over residues 28–42 (EPVQEEKGTKDKAAF) the composition is skewed to basic and acidic residues.

This sequence belongs to the SepF family. As to quaternary structure, homodimer. Interacts with FtsZ.

The protein localises to the cytoplasm. Functionally, cell division protein that is part of the divisome complex and is recruited early to the Z-ring. Probably stimulates Z-ring formation, perhaps through the cross-linking of FtsZ protofilaments. Its function overlaps with FtsA. The protein is Cell division protein SepF of Bacillus pumilus (strain SAFR-032).